Here is a 432-residue protein sequence, read N- to C-terminus: Nuclear pore complex-interacting protein family member B9 (432 aa).

Disordered regions lie at residues 260–280 (RMGRQPPPPTQQHSITDNSLS) and 353–420 (SPLP…LRTR). Polar residues predominate over residues 270–280 (QQHSITDNSLS). A compositionally biased stretch (basic and acidic residues) spans 374-402 (EVEKPPKPKRWRVDEVEQSPKPKRQREAE). Residues 408 to 420 (KPKRRRLSKLRTR) are compositionally biased toward basic residues.

Belongs to the NPIP family.

The polypeptide is Nuclear pore complex-interacting protein family member B9 (NPIPB9) (Homo sapiens (Human)).